A 458-amino-acid chain; its full sequence is A-type ATP synthase subunit B (458 aa).

Belongs to the ATPase alpha/beta chains family. Has multiple subunits with at least A(3), B(3), C, D, E, F, H, I and proteolipid K(x).

The protein localises to the cell membrane. In terms of biological role, component of the A-type ATP synthase that produces ATP from ADP in the presence of a proton gradient across the membrane. The B chain is a regulatory subunit. In Methanocella arvoryzae (strain DSM 22066 / NBRC 105507 / MRE50), this protein is A-type ATP synthase subunit B.